Here is a 208-residue protein sequence, read N- to C-terminus: Large ribosomal subunit protein bL9 (208 aa).

The disordered stretch occupies residues 161–208 (KKRKIEKEVEEGSGTSVDESLKLDSVSDSIDTSGVNSSDKEEENNIIE). Over residues 186-197 (VSDSIDTSGVNS) the composition is skewed to polar residues.

The protein belongs to the bacterial ribosomal protein bL9 family.

Binds to the 23S rRNA. In Ehrlichia canis (strain Jake), this protein is Large ribosomal subunit protein bL9.